Consider the following 145-residue polypeptide: Small ribosomal subunit protein eS12A (145 aa).

The protein belongs to the eukaryotic ribosomal protein eS12 family. As to quaternary structure, component of the small ribosomal subunit (SSU). Mature yeast ribosomes consist of a small (40S) and a large (60S) subunit. The 40S small subunit contains 1 molecule of ribosomal RNA (18S rRNA) and at least 33 different proteins. The large 60S subunit contains 3 rRNA molecules (25S, 5.8S and 5S rRNA) and at least 46 different proteins.

The protein localises to the cytoplasm. Functionally, component of the ribosome, a large ribonucleoprotein complex responsible for the synthesis of proteins in the cell. The small ribosomal subunit (SSU) binds messenger RNAs (mRNAs) and translates the encoded message by selecting cognate aminoacyl-transfer RNA (tRNA) molecules. The large subunit (LSU) contains the ribosomal catalytic site termed the peptidyl transferase center (PTC), which catalyzes the formation of peptide bonds, thereby polymerizing the amino acids delivered by tRNAs into a polypeptide chain. The nascent polypeptides leave the ribosome through a tunnel in the LSU and interact with protein factors that function in enzymatic processing, targeting, and the membrane insertion of nascent chains at the exit of the ribosomal tunnel. The sequence is that of Small ribosomal subunit protein eS12A (rps1201) from Schizosaccharomyces pombe (strain 972 / ATCC 24843) (Fission yeast).